Here is a 263-residue protein sequence, read N- to C-terminus: 5'-nucleotidase SurE (263 aa).

A divalent metal cation contacts are provided by D8, D9, S40, and N93.

This sequence belongs to the SurE nucleotidase family. A divalent metal cation serves as cofactor.

The protein resides in the cytoplasm. The catalysed reaction is a ribonucleoside 5'-phosphate + H2O = a ribonucleoside + phosphate. In terms of biological role, nucleotidase that shows phosphatase activity on nucleoside 5'-monophosphates. The sequence is that of 5'-nucleotidase SurE from Beijerinckia indica subsp. indica (strain ATCC 9039 / DSM 1715 / NCIMB 8712).